The chain runs to 244 residues: Leucyl/phenylalanyl-tRNA--protein transferase (244 aa).

This sequence belongs to the L/F-transferase family.

It localises to the cytoplasm. It catalyses the reaction N-terminal L-lysyl-[protein] + L-leucyl-tRNA(Leu) = N-terminal L-leucyl-L-lysyl-[protein] + tRNA(Leu) + H(+). The catalysed reaction is N-terminal L-arginyl-[protein] + L-leucyl-tRNA(Leu) = N-terminal L-leucyl-L-arginyl-[protein] + tRNA(Leu) + H(+). The enzyme catalyses L-phenylalanyl-tRNA(Phe) + an N-terminal L-alpha-aminoacyl-[protein] = an N-terminal L-phenylalanyl-L-alpha-aminoacyl-[protein] + tRNA(Phe). In terms of biological role, functions in the N-end rule pathway of protein degradation where it conjugates Leu, Phe and, less efficiently, Met from aminoacyl-tRNAs to the N-termini of proteins containing an N-terminal arginine or lysine. This chain is Leucyl/phenylalanyl-tRNA--protein transferase, found in Thermodesulfovibrio yellowstonii (strain ATCC 51303 / DSM 11347 / YP87).